The chain runs to 196 residues: RNA annealing protein YRA2 (196 aa).

Disordered stretches follow at residues 1–63 (MSVD…PTHQ) and 143–196 (DSTR…MNGN). The RRM domain occupies 63-137 (QRVRFLNIPL…AKITVEIFEQ (75 aa)). Positions 149 to 159 (RSTDHVEKEAG) are enriched in basic and acidic residues.

This sequence belongs to the YRA1 family. Associates with mRNPs.

It is found in the nucleus. Its function is as follows. Involved in export of poly(A) mRNAs from the nucleus. Recruited to the coding sequences as well as poly-A sites of active genes. The chain is RNA annealing protein YRA2 (YRA2) from Eremothecium gossypii (strain ATCC 10895 / CBS 109.51 / FGSC 9923 / NRRL Y-1056) (Yeast).